The sequence spans 301 residues: Nucleotide-binding protein Helmi_06460 (301 aa).

Residue 17–24 (GLSGAGKS) coordinates ATP. Residue 68-71 (DIRG) coordinates GTP.

This sequence belongs to the RapZ-like family.

In terms of biological role, displays ATPase and GTPase activities. This Heliobacterium modesticaldum (strain ATCC 51547 / Ice1) protein is Nucleotide-binding protein Helmi_06460.